A 322-amino-acid polypeptide reads, in one-letter code: Acetyl-coenzyme A carboxylase carboxyl transferase subunit alpha (322 aa).

The region spanning 39 to 296 (DLTALKKQLI…HSKLVTELNY (258 aa)) is the CoA carboxyltransferase C-terminal domain.

The protein belongs to the AccA family. As to quaternary structure, acetyl-CoA carboxylase is a heterohexamer composed of biotin carboxyl carrier protein (accB), biotin carboxylase (accC) and two subunits each of ACCase subunit alpha (accA) and ACCase subunit beta (accD).

It localises to the plastid. The protein localises to the chloroplast. It catalyses the reaction N(6)-carboxybiotinyl-L-lysyl-[protein] + acetyl-CoA = N(6)-biotinyl-L-lysyl-[protein] + malonyl-CoA. Its pathway is lipid metabolism; malonyl-CoA biosynthesis; malonyl-CoA from acetyl-CoA: step 1/1. In terms of biological role, component of the acetyl coenzyme A carboxylase (ACC) complex. First, biotin carboxylase catalyzes the carboxylation of biotin on its carrier protein (BCCP) and then the CO(2) group is transferred by the carboxyltransferase to acetyl-CoA to form malonyl-CoA. The chain is Acetyl-coenzyme A carboxylase carboxyl transferase subunit alpha from Antithamnion sp. (Red alga).